A 120-amino-acid polypeptide reads, in one-letter code: NAD(P)H-quinone oxidoreductase subunit 3, chloroplastic (120 aa).

The next 3 membrane-spanning stretches (helical) occupy residues 10 to 30, 64 to 84, and 89 to 109; these read FWAF…TSSL, MFAL…PWAM, and LGVL…IGLV.

This sequence belongs to the complex I subunit 3 family. In terms of assembly, NDH is composed of at least 16 different subunits, 5 of which are encoded in the nucleus.

The protein resides in the plastid. The protein localises to the chloroplast thylakoid membrane. It carries out the reaction a plastoquinone + NADH + (n+1) H(+)(in) = a plastoquinol + NAD(+) + n H(+)(out). It catalyses the reaction a plastoquinone + NADPH + (n+1) H(+)(in) = a plastoquinol + NADP(+) + n H(+)(out). Its function is as follows. NDH shuttles electrons from NAD(P)H:plastoquinone, via FMN and iron-sulfur (Fe-S) centers, to quinones in the photosynthetic chain and possibly in a chloroplast respiratory chain. The immediate electron acceptor for the enzyme in this species is believed to be plastoquinone. Couples the redox reaction to proton translocation, and thus conserves the redox energy in a proton gradient. This is NAD(P)H-quinone oxidoreductase subunit 3, chloroplastic from Zygnema circumcarinatum (Green alga).